The following is a 309-amino-acid chain: Haloalkane dehalogenase (309 aa).

Residues 37–148 (PTVLFLHGNP…FERWEDFHQR (112 aa)) form the AB hydrolase-1 domain. Asp-110 (nucleophile) is an active-site residue. Residue Glu-134 is the Proton donor of the active site. The Proton acceptor role is filled by His-278.

This sequence belongs to the haloalkane dehalogenase family. Type 2 subfamily. In terms of assembly, monomer.

The catalysed reaction is 1-haloalkane + H2O = a halide anion + a primary alcohol + H(+). Functionally, catalyzes hydrolytic cleavage of carbon-halogen bonds in halogenated aliphatic compounds, leading to the formation of the corresponding primary alcohols, halide ions and protons. In Mesorhizobium japonicum (strain LMG 29417 / CECT 9101 / MAFF 303099) (Mesorhizobium loti (strain MAFF 303099)), this protein is Haloalkane dehalogenase.